The following is a 429-amino-acid chain: 3-phosphoshikimate 1-carboxyvinyltransferase (429 aa).

3 residues coordinate 3-phosphoshikimate: Lys23, Ser24, and Arg28. Position 23 (Lys23) interacts with phosphoenolpyruvate. Phosphoenolpyruvate is bound by residues Gly94 and Arg126. 3-phosphoshikimate is bound by residues Ser171, Ser172, Gln173, Ser199, Asp316, Asn339, and Lys343. Gln173 is a phosphoenolpyruvate binding site. Asp316 serves as the catalytic Proton acceptor. The phosphoenolpyruvate site is built by Arg347, Arg389, and Lys414.

The protein belongs to the EPSP synthase family. Monomer.

The protein resides in the cytoplasm. It carries out the reaction 3-phosphoshikimate + phosphoenolpyruvate = 5-O-(1-carboxyvinyl)-3-phosphoshikimate + phosphate. The protein operates within metabolic intermediate biosynthesis; chorismate biosynthesis; chorismate from D-erythrose 4-phosphate and phosphoenolpyruvate: step 6/7. In terms of biological role, catalyzes the transfer of the enolpyruvyl moiety of phosphoenolpyruvate (PEP) to the 5-hydroxyl of shikimate-3-phosphate (S3P) to produce enolpyruvyl shikimate-3-phosphate and inorganic phosphate. This chain is 3-phosphoshikimate 1-carboxyvinyltransferase, found in Idiomarina loihiensis (strain ATCC BAA-735 / DSM 15497 / L2-TR).